The primary structure comprises 466 residues: Fez family zinc finger protein 1 (466 aa).

The Engrailed homology 1 repressor motif lies at Pro34–Pro49. 6 consecutive C2H2-type zinc fingers follow at residues Phe261 to His283, Phe289 to His311, His317 to His339, Phe345 to His367, Phe373 to His395, and Phe401 to His424. The disordered stretch occupies residues Leu446–Tyr466. Positions His453–Tyr466 are enriched in polar residues.

This sequence belongs to the krueppel C2H2-type zinc-finger protein family.

The protein localises to the nucleus. Its function is as follows. Transcription repressor. Involved in the development of the forebrain region. This chain is Fez family zinc finger protein 1 (fezf1), found in Xenopus laevis (African clawed frog).